Consider the following 292-residue polypeptide: Pyridoxal 5'-phosphate synthase subunit PdxS (292 aa).

D-ribose 5-phosphate is bound at residue D22. The Schiff-base intermediate with D-ribose 5-phosphate role is filled by K79. D-ribose 5-phosphate is bound at residue G151. R163 is a D-glyceraldehyde 3-phosphate binding site. D-ribose 5-phosphate contacts are provided by residues G212 and 233-234 (GS).

Belongs to the PdxS/SNZ family. In the presence of PdxT, forms a dodecamer of heterodimers.

It catalyses the reaction aldehydo-D-ribose 5-phosphate + D-glyceraldehyde 3-phosphate + L-glutamine = pyridoxal 5'-phosphate + L-glutamate + phosphate + 3 H2O + H(+). Its pathway is cofactor biosynthesis; pyridoxal 5'-phosphate biosynthesis. In terms of biological role, catalyzes the formation of pyridoxal 5'-phosphate from ribose 5-phosphate (RBP), glyceraldehyde 3-phosphate (G3P) and ammonia. The ammonia is provided by the PdxT subunit. Can also use ribulose 5-phosphate and dihydroxyacetone phosphate as substrates, resulting from enzyme-catalyzed isomerization of RBP and G3P, respectively. In Thermoanaerobacter pseudethanolicus (strain ATCC 33223 / 39E) (Clostridium thermohydrosulfuricum), this protein is Pyridoxal 5'-phosphate synthase subunit PdxS.